The chain runs to 2224 residues: Myomegalin (2224 aa).

4 coiled-coil regions span residues 41 to 97, 162 to 205, 236 to 318, and 350 to 682; these read REDV…RQQE, DQYS…LLEE, VSES…REML, and CSQL…ALRQ. The segment at 206–236 is disordered; that stretch reads PASMEVQPVPKGLPTQQKPDLHETPTTQPPV. Over residues 219 to 236 the composition is skewed to polar residues; the sequence is PTQQKPDLHETPTTQPPV. Positions 703–751 are disordered; the sequence is GVTSIGPHHGEQTDQGSMQMPSRDDSTSLTAREEASIPRSTLGDSDTVA. The residue at position 705 (Thr705) is a Phosphothreonine. Over residues 724 to 738 the composition is skewed to basic and acidic residues; it reads SRDDSTSLTAREEAS. Coiled coils occupy residues 745–822, 856–886, and 949–986; these read GDSD…QLVD, NKRQQLLLMLEGLVDERSRLNEALQAERQLY, and AQEMLHLRAEIHQHLEEKRKAEVELKELKAQIEEAGFS. Disordered stretches follow at residues 1098-1128, 1141-1161, and 1270-1298; these read TGLPSLGKHQHQEQENTTTARPGSRPQSLPL, NKSQAQDSGHQPEFSLPGSTK, and VSPPAKKPLENKPGKQEEFRAHGTPDDSS. Positions 1112–1124 are enriched in polar residues; that stretch reads ENTTTARPGSRPQ. 3 coiled-coil regions span residues 1159–1187, 1295–1331, and 1377–1401; these read STKHLRSQLAQCRQRYQDLQEKLLISEAT, DDSSLLRKDIRDLKAQLQNANKVIQNLRSRVRSLSAT, and GLQAKKDLESLIQRVSQLEAQLPKT. The segment covering 1276–1298 has biased composition (basic and acidic residues); it reads KPLENKPGKQEEFRAHGTPDDSS. The 92-residue stretch at 1497-1588 folds into the Olduvai domain; the sequence is KDHKSEKEEA…DEKKPSPSHS (92 aa). Disordered stretches follow at residues 1576-1637, 1736-1757, 1805-1824, and 1962-2001; these read THYD…SLSQ, SSGQWDMMRPQKGSVSGELSSG, LSSTARENGSTSHFYSQGLE, and KASLGPIAVGQSFPDKAEPANLHQGSAASPPVRDVGLNSP. Positions 1599–1609 are enriched in polar residues; sequence ESSSSPISLPT. Positions 1748 to 1757 are enriched in low complexity; it reads GSVSGELSSG. Positions 1769 to 1958 form a coiled coil; sequence GADLLEEHLG…RLQLEQQMDR (190 aa). Residues 2148-2191 adopt a coiled-coil conformation; it reads KEGQLMEKELLDLRAQVSQQEQILQNTAARLKRANQRKKSMEQF.

As to quaternary structure, interacts with PDE4D. Isoform 2 interacts with MAPRE1 and MAPRE3. Isoform 2 forms a pericentrosomal complex with AKAP9, CDK5RAP2 and EB1/MAPRE1; within this complex, may mediate MAPRE1-binding to CDK5RAP2. Interaction with AKAP9 stabilizes both proteins. Isoform 2 interacts (via N-terminus) with CAMSAP2; this interaction is much stronger in the presence of AKAP9. In complex with AKAP9, Isoform 2 recruits CAMSAP2 to the Golgi apparatus. Isoform 2 interacts with unglycosylated LGALS3BP; this interaction may connect the pericentrosomal complex to the gamma-tubulin ring complex (gamma-TuRC) to promote microtubule assembly and acetylation.

The protein resides in the cytoplasm. It localises to the cytoskeleton. The protein localises to the microtubule organizing center. It is found in the centrosome. Its subcellular location is the golgi apparatus. In terms of biological role, functions as an anchor sequestering components of the cAMP-dependent pathway to Golgi and/or centrosomes. Its function is as follows. Participates in microtubule dynamics, promoting microtubule assembly. Depending upon the cell context, may act at the level of the Golgi apparatus or that of the centrosome. In complex with AKAP9, recruits CAMSAP2 to the Golgi apparatus and tethers non-centrosomal minus-end microtubules to the Golgi, an important step for polarized cell movement. In complex with AKAP9, EB1/MAPRE1 and CDK5RAP2, contributes to microtubules nucleation and extension from the centrosome to the cell periphery, a crucial process for directed cell migration, mitotic spindle orientation and cell-cycle progression. This Mus musculus (Mouse) protein is Myomegalin (Pde4dip).